Reading from the N-terminus, the 151-residue chain is Ubiquitin-conjugating enzyme E2-17 kDa (151 aa).

A UBC core domain is found at 4–150 (PARRRLMRDF…VKACVEQSFI (147 aa)). C88 acts as the Glycyl thioester intermediate in catalysis.

Belongs to the ubiquitin-conjugating enzyme family.

It is found in the nucleus. The catalysed reaction is S-ubiquitinyl-[E1 ubiquitin-activating enzyme]-L-cysteine + [E2 ubiquitin-conjugating enzyme]-L-cysteine = [E1 ubiquitin-activating enzyme]-L-cysteine + S-ubiquitinyl-[E2 ubiquitin-conjugating enzyme]-L-cysteine.. The protein operates within protein modification; protein ubiquitination. E2 ubiquitin-conjugating enzyme that accepts ubiquitin from the ubiquitin-activating enzyme E1 and transfers it to a E3 ubiquitin-protein ligase. Required for postreplication repair of UV-damaged DNA. Involved in the negative regulation of the Ras/MAPK signaling pathway in the wing by acting with the putative E3 ligases poe, Kcmf1 and Ufd4 to mediate the ubiquitination and proteasomal degradation of rl/MAPK. Required for in mitophagy. This Drosophila melanogaster (Fruit fly) protein is Ubiquitin-conjugating enzyme E2-17 kDa.